Reading from the N-terminus, the 97-residue chain is Large ribosomal subunit protein uL23 (97 aa).

Belongs to the universal ribosomal protein uL23 family. Part of the 50S ribosomal subunit. Contacts protein L29, and trigger factor when it is bound to the ribosome.

In terms of biological role, one of the early assembly proteins it binds 23S rRNA. One of the proteins that surrounds the polypeptide exit tunnel on the outside of the ribosome. Forms the main docking site for trigger factor binding to the ribosome. This Acidithiobacillus ferrooxidans (strain ATCC 23270 / DSM 14882 / CIP 104768 / NCIMB 8455) (Ferrobacillus ferrooxidans (strain ATCC 23270)) protein is Large ribosomal subunit protein uL23.